A 416-amino-acid polypeptide reads, in one-letter code: Major facilitator superfamily domain-containing protein 3 (416 aa).

Helical transmembrane passes span glycine 10–leucine 30, valine 40–valine 60, valine 68–proline 88, threonine 99–leucine 119, glutamine 139–phenylalanine 158, leucine 170–leucine 190, tyrosine 204–threonine 224, leucine 252–leucine 272, leucine 295–leucine 315, alanine 324–phenylalanine 344, phenylalanine 365–alanine 385, and leucine 392–proline 412.

This sequence belongs to the major facilitator superfamily.

Its subcellular location is the membrane. This is Major facilitator superfamily domain-containing protein 3 (Mfsd3) from Rattus norvegicus (Rat).